A 141-amino-acid polypeptide reads, in one-letter code: Large ribosomal subunit protein uL11 (141 aa).

The protein belongs to the universal ribosomal protein uL11 family. Part of the ribosomal stalk of the 50S ribosomal subunit. Interacts with L10 and the large rRNA to form the base of the stalk. L10 forms an elongated spine to which L12 dimers bind in a sequential fashion forming a multimeric L10(L12)X complex. Post-translationally, one or more lysine residues are methylated.

Its function is as follows. Forms part of the ribosomal stalk which helps the ribosome interact with GTP-bound translation factors. The protein is Large ribosomal subunit protein uL11 of Chlorobium phaeobacteroides (strain DSM 266 / SMG 266 / 2430).